The sequence spans 223 residues: Ribonuclease DdI (223 aa).

The N-terminal stretch at 1–25 (MRLIAALLSVLLIASTAQSTVTIYE) is a signal peptide. The cysteines at positions 46 and 51 are disulfide-linked. Residues His63, Glu113, and His117 contribute to the active site. Residues Cys78 and Cys120 are joined by a disulfide bond. Asn144 carries an N-linked (GlcNAc...) asparagine glycan. 2 disulfides stabilise this stretch: Cys183–Cys213 and Cys194–Cys205.

This sequence belongs to the RNase T2 family.

It localises to the lysosome. It catalyses the reaction a ribonucleotidyl-ribonucleotide-RNA + H2O = a 3'-end 3'-phospho-ribonucleotide-RNA + a 5'-end dephospho-ribonucleoside-RNA + H(+). With respect to regulation, inhibited by Cu(2+) and Zn(2+). In terms of biological role, releases mononucleotides from RNA in the order of 3'-GMP &gt; 3'-UMP &gt; 3'-AMP &gt; 3'-CMP. This chain is Ribonuclease DdI (ddiA), found in Dictyostelium discoideum (Social amoeba).